We begin with the raw amino-acid sequence, 121 residues long: Large ribosomal subunit protein bL19 (121 aa).

The protein belongs to the bacterial ribosomal protein bL19 family.

This protein is located at the 30S-50S ribosomal subunit interface and may play a role in the structure and function of the aminoacyl-tRNA binding site. This is Large ribosomal subunit protein bL19 from Chlorobium phaeobacteroides (strain BS1).